A 276-amino-acid polypeptide reads, in one-letter code: AT-hook motif nuclear-localized protein 17 (276 aa).

The span at 1-10 (MKGEYREQKS) shows a compositional bias: basic and acidic residues. Disordered regions lie at residues 1–80 (MKGE…RDTD) and 212–248 (AEEE…SGGE). 2 stretches are compositionally biased toward low complexity: residues 20–31 (HQQQQQQQQQQH) and 40–49 (SSTVTPTVDD). The segment at residues 56–68 (RRPRGRPPGSKNK) is a DNA-binding region (a.T hook). Residues 80–230 (DPPMSPYILE…GTGEREGQSP (151 aa)) enclose the PPC domain. Over residues 212–227 (AEEEQKHSAGTGEREG) the composition is skewed to basic and acidic residues. A compositionally biased stretch (gly residues) spans 233-248 (SGGGEESGQMAGSGGE).

The protein localises to the nucleus. In terms of biological role, transcription factor that specifically binds AT-rich DNA sequences related to the nuclear matrix attachment regions (MARs). The sequence is that of AT-hook motif nuclear-localized protein 17 from Arabidopsis thaliana (Mouse-ear cress).